Consider the following 856-residue polypeptide: DNA mismatch repair protein MutS (856 aa).

618–625 contributes to the ATP binding site; the sequence is GPNMGGKS.

This sequence belongs to the DNA mismatch repair MutS family.

Functionally, this protein is involved in the repair of mismatches in DNA. It is possible that it carries out the mismatch recognition step. This protein has a weak ATPase activity. This chain is DNA mismatch repair protein MutS, found in Shewanella baltica (strain OS223).